A 503-amino-acid chain; its full sequence is Glutamyl-tRNA(Gln) amidotransferase subunit A (503 aa).

Catalysis depends on charge relay system residues Lys79 and Ser154. The active-site Acyl-ester intermediate is the Ser178.

This sequence belongs to the amidase family. GatA subfamily. Heterotrimer of A, B and C subunits.

The enzyme catalyses L-glutamyl-tRNA(Gln) + L-glutamine + ATP + H2O = L-glutaminyl-tRNA(Gln) + L-glutamate + ADP + phosphate + H(+). Allows the formation of correctly charged Gln-tRNA(Gln) through the transamidation of misacylated Glu-tRNA(Gln) in organisms which lack glutaminyl-tRNA synthetase. The reaction takes place in the presence of glutamine and ATP through an activated gamma-phospho-Glu-tRNA(Gln). The protein is Glutamyl-tRNA(Gln) amidotransferase subunit A of Agathobacter rectalis (strain ATCC 33656 / DSM 3377 / JCM 17463 / KCTC 5835 / VPI 0990) (Eubacterium rectale).